The sequence spans 171 residues: tRNA-splicing endonuclease subunit Sen15 (171 aa).

The interval 1–35 is disordered; the sequence is MEERGDSEPTPGCSGLGPGGVRGFGDGGGAPSWAP. Ser-7 carries the phosphoserine modification. Residues 14–30 are compositionally biased toward gly residues; that stretch reads SGLGPGGVRGFGDGGGA. Ser-168 bears the Phosphoserine mark.

Belongs to the SEN15 family. As to quaternary structure, homodimer. tRNA splicing endonuclease is a heterotetramer composed of TSEN2, TSEN15, TSEN34/LENG5 and TSEN54. tRNA splicing endonuclease complex also contains proteins of the Pre-mRNA 3' end processing machinery, such as CLP1, CPSF1, CPSF4 and CSTF2. As to expression, widely expressed. Highly expressed in testis and uterus.

It localises to the nucleus. The protein resides in the nucleolus. Functionally, non-catalytic subunit of the tRNA-splicing endonuclease complex, a complex responsible for identification and cleavage of the splice sites in pre-tRNA. It cleaves pre-tRNA at the 5' and 3' splice sites to release the intron. The products are an intron and two tRNA half-molecules bearing 2',3' cyclic phosphate and 5'-OH termini. There are no conserved sequences at the splice sites, but the intron is invariably located at the same site in the gene, placing the splice sites an invariant distance from the constant structural features of the tRNA body. The tRNA splicing endonuclease is also involved in mRNA processing via its association with pre-mRNA 3'-end processing factors, establishing a link between pre-tRNA splicing and pre-mRNA 3'-end formation, suggesting that the endonuclease subunits function in multiple RNA-processing events. The polypeptide is tRNA-splicing endonuclease subunit Sen15 (TSEN15) (Homo sapiens (Human)).